A 151-amino-acid polypeptide reads, in one-letter code: UPF0208 membrane protein Ent638_2839 (151 aa).

2 helical membrane-spanning segments follow: residues 46-65 (YAIR…QIAL) and 69-91 (LGPA…WWLG).

This sequence belongs to the UPF0208 family.

It localises to the cell inner membrane. This Enterobacter sp. (strain 638) protein is UPF0208 membrane protein Ent638_2839.